The primary structure comprises 284 residues: Tryptophan 2,3-dioxygenase (284 aa).

Substrate is bound by residues 53-57 (FIIQH) and Arg119. His242 is a binding site for heme. A substrate-binding site is contributed by Thr256.

This sequence belongs to the tryptophan 2,3-dioxygenase family. Homotetramer. Requires heme as cofactor.

It catalyses the reaction L-tryptophan + O2 = N-formyl-L-kynurenine. It functions in the pathway amino-acid degradation; L-tryptophan degradation via kynurenine pathway; L-kynurenine from L-tryptophan: step 1/2. It participates in siderophore biosynthesis; quinolobactin biosynthesis. Heme-dependent dioxygenase that catalyzes the oxidative cleavage of the L-tryptophan (L-Trp) pyrrole ring and converts L-tryptophan to N-formyl-L-kynurenine. Catalyzes the oxidative cleavage of the indole moiety. Required for synthesis of the siderophore quinolobactin. The sequence is that of Tryptophan 2,3-dioxygenase from Pseudomonas fluorescens.